The sequence spans 445 residues: GRAM domain-containing protein 2B (445 aa).

An N-acetylmethionine modification is found at Met-1. The disordered stretch occupies residues 1–118; sequence MVKKRLSSSD…ERKKSSSSSQ (118 aa). 2 stretches are compositionally biased toward polar residues: residues 18–44 and 56–68; these read PSNS…SSEA and KSPT…SSVE. Residues 82–93 show a composition bias toward low complexity; sequence SKSSFDGSSLLS. The span at 94–112 shows a compositional bias: basic and acidic residues; sequence DKNDCKTESKTDSKTERKK. Positions 123–190 constitute a GRAM domain; sequence MHFHKLFLDV…FSVTLIKKTK (68 aa). Over residues 233-246 the composition is skewed to polar residues; sequence TSVGNSPNPSSAEN. The segment at 233-252 is disordered; sequence TSVGNSPNPSSAENSFRADR. Phosphoserine is present on residues Ser-238, Ser-255, and Ser-265. Positions 277–331 are disordered; that stretch reads DLEGYSSSGSQTPESENSRDFHVTESQTVLNVTKGETKPPRTDAHGSRAPDGKAK. Residues 281–291 show a composition bias toward polar residues; sequence YSSSGSQTPES. Residues 311-330 are compositionally biased toward basic and acidic residues; it reads GETKPPRTDAHGSRAPDGKA.

The polypeptide is GRAM domain-containing protein 2B (Gramd2b) (Mus musculus (Mouse)).